Consider the following 267-residue polypeptide: Glucosamine-6-phosphate deaminase (267 aa).

The active-site Proton acceptor; for enolization step is the D72. D141 functions as the For ring-opening step in the catalytic mechanism. Catalysis depends on H143, which acts as the Proton acceptor; for ring-opening step. E148 functions as the For ring-opening step in the catalytic mechanism.

Belongs to the glucosamine/galactosamine-6-phosphate isomerase family. NagB subfamily.

The enzyme catalyses alpha-D-glucosamine 6-phosphate + H2O = beta-D-fructose 6-phosphate + NH4(+). It participates in amino-sugar metabolism; N-acetylneuraminate degradation; D-fructose 6-phosphate from N-acetylneuraminate: step 5/5. With respect to regulation, allosterically activated by N-acetylglucosamine 6-phosphate (GlcNAc6P). Its function is as follows. Catalyzes the reversible isomerization-deamination of glucosamine 6-phosphate (GlcN6P) to form fructose 6-phosphate (Fru6P) and ammonium ion. In Borrelia hermsii (strain HS1 / DAH), this protein is Glucosamine-6-phosphate deaminase.